Here is a 261-residue protein sequence, read N- to C-terminus: tRNA pseudouridine synthase A (261 aa).

The active-site Nucleophile is Asp-51. Substrate is bound at residue Tyr-109.

This sequence belongs to the tRNA pseudouridine synthase TruA family. As to quaternary structure, homodimer.

The enzyme catalyses uridine(38/39/40) in tRNA = pseudouridine(38/39/40) in tRNA. In terms of biological role, formation of pseudouridine at positions 38, 39 and 40 in the anticodon stem and loop of transfer RNAs. This is tRNA pseudouridine synthase A from Shewanella sp. (strain W3-18-1).